The following is a 414-amino-acid chain: Signal recognition particle receptor FtsY (414 aa).

GTP-binding positions include 216–223 (GVNGVGKT), 298–302 (DTAGR), and 362–365 (TKLD).

Belongs to the GTP-binding SRP family. FtsY subfamily. Part of the signal recognition particle protein translocation system, which is composed of SRP and FtsY. SRP is a ribonucleoprotein composed of Ffh and a 4.5S RNA molecule.

It is found in the cell inner membrane. The protein localises to the cytoplasm. It catalyses the reaction GTP + H2O = GDP + phosphate + H(+). Functionally, involved in targeting and insertion of nascent membrane proteins into the cytoplasmic membrane. Acts as a receptor for the complex formed by the signal recognition particle (SRP) and the ribosome-nascent chain (RNC). Interaction with SRP-RNC leads to the transfer of the RNC complex to the Sec translocase for insertion into the membrane, the hydrolysis of GTP by both Ffh and FtsY, and the dissociation of the SRP-FtsY complex into the individual components. The chain is Signal recognition particle receptor FtsY from Haemophilus influenzae (strain ATCC 51907 / DSM 11121 / KW20 / Rd).